Reading from the N-terminus, the 149-residue chain is Large ribosomal subunit protein uL13 (149 aa).

The protein belongs to the universal ribosomal protein uL13 family. As to quaternary structure, part of the 50S ribosomal subunit.

Functionally, this protein is one of the early assembly proteins of the 50S ribosomal subunit, although it is not seen to bind rRNA by itself. It is important during the early stages of 50S assembly. The protein is Large ribosomal subunit protein uL13 of Pelodictyon phaeoclathratiforme (strain DSM 5477 / BU-1).